We begin with the raw amino-acid sequence, 467 residues long: Putative sulfoquinovose importer (467 aa).

12 consecutive transmembrane segments (helical) span residues 17–37 (IAYG…TLYL), 54–74 (IIFL…GFLL), 88–108 (PFIL…FIAT), 121–141 (ALFM…GAMI), 160–180 (GGAT…QSLF), 185–205 (VGYA…MMLC), 238–258 (LLVL…KLAI), 275–295 (WMGF…PLTV), 303–323 (VYLA…FWGS), 325–345 (SFTF…VNSL), 379–399 (ISAA…GYVP), and 414–434 (LIFI…GFFY).

Belongs to the sodium:galactoside symporter (TC 2.A.2) family.

The protein localises to the cell inner membrane. In terms of biological role, could be involved in sulfoquinovose import. In Escherichia coli (strain K12), this protein is Putative sulfoquinovose importer (yihO).